Reading from the N-terminus, the 353-residue chain is Quinolinate synthase (353 aa).

Iminosuccinate is bound by residues histidine 47 and serine 68. Cysteine 113 is a binding site for [4Fe-4S] cluster. Residues 139–141 and serine 156 each bind iminosuccinate; that span reads YAN. Residue cysteine 200 participates in [4Fe-4S] cluster binding. Residues 226–228 and threonine 243 each bind iminosuccinate; that span reads HPE. Cysteine 297 is a [4Fe-4S] cluster binding site.

Belongs to the quinolinate synthase family. Type 1 subfamily. Requires [4Fe-4S] cluster as cofactor.

The protein localises to the cytoplasm. The catalysed reaction is iminosuccinate + dihydroxyacetone phosphate = quinolinate + phosphate + 2 H2O + H(+). It participates in cofactor biosynthesis; NAD(+) biosynthesis; quinolinate from iminoaspartate: step 1/1. Its function is as follows. Catalyzes the condensation of iminoaspartate with dihydroxyacetone phosphate to form quinolinate. The chain is Quinolinate synthase from Pectobacterium carotovorum subsp. carotovorum (strain PC1).